The chain runs to 282 residues: Trihydroxynaphthalene reductase (282 aa).

3 residues coordinate NADP(+): Ile41, Asn114, and Arg147. Active-site proton donor residues include Ser164 and Tyr178. 4 residues coordinate NADP(+): Tyr178, Lys182, Ile211, and Thr213. Lys182 functions as the Lowers pKa of active site Tyr in the catalytic mechanism.

It belongs to the short-chain dehydrogenases/reductases (SDR) family. As to quaternary structure, homotetramer.

It functions in the pathway pigment biosynthesis; melanin biosynthesis. Functionally, catalyzes the NADPH-dependent reduction of 1,3,8-trihydroxynaphthalene (T3HN) into (-)-vermelone. Essential for appressorial penetration of colletotrichum lagenarium. This chain is Trihydroxynaphthalene reductase (THR1), found in Colletotrichum orbiculare (strain 104-T / ATCC 96160 / CBS 514.97 / LARS 414 / MAFF 240422) (Cucumber anthracnose fungus).